The sequence spans 251 residues: Imidazole glycerol phosphate synthase subunit HisF (251 aa).

Active-site residues include Asp11 and Asp130.

The protein belongs to the HisA/HisF family. In terms of assembly, heterodimer of HisH and HisF.

The protein resides in the cytoplasm. The enzyme catalyses 5-[(5-phospho-1-deoxy-D-ribulos-1-ylimino)methylamino]-1-(5-phospho-beta-D-ribosyl)imidazole-4-carboxamide + L-glutamine = D-erythro-1-(imidazol-4-yl)glycerol 3-phosphate + 5-amino-1-(5-phospho-beta-D-ribosyl)imidazole-4-carboxamide + L-glutamate + H(+). It functions in the pathway amino-acid biosynthesis; L-histidine biosynthesis; L-histidine from 5-phospho-alpha-D-ribose 1-diphosphate: step 5/9. Functionally, IGPS catalyzes the conversion of PRFAR and glutamine to IGP, AICAR and glutamate. The HisF subunit catalyzes the cyclization activity that produces IGP and AICAR from PRFAR using the ammonia provided by the HisH subunit. This Metallosphaera sedula (strain ATCC 51363 / DSM 5348 / JCM 9185 / NBRC 15509 / TH2) protein is Imidazole glycerol phosphate synthase subunit HisF.